The sequence spans 525 residues: GMP synthase [glutamine-hydrolyzing] (525 aa).

A Glutamine amidotransferase type-1 domain is found at 9–207 (RILILDFGSQ…VRDICQCEAL (199 aa)). C86 functions as the Nucleophile in the catalytic mechanism. Active-site residues include H181 and E183. The GMPS ATP-PPase domain maps to 208 to 400 (WTPAKIIDDA…LGLPYDMLYR (193 aa)). 235 to 241 (SGGVDSS) lines the ATP pocket.

As to quaternary structure, homodimer.

The catalysed reaction is XMP + L-glutamine + ATP + H2O = GMP + L-glutamate + AMP + diphosphate + 2 H(+). Its pathway is purine metabolism; GMP biosynthesis; GMP from XMP (L-Gln route): step 1/1. Its function is as follows. Catalyzes the synthesis of GMP from XMP. The chain is GMP synthase [glutamine-hydrolyzing] from Shigella sonnei (strain Ss046).